Reading from the N-terminus, the 354-residue chain is Galactoside alpha-(1,2)-fucosyltransferase 2 (354 aa).

Residues 1–22 (MRFAPDYVLCPPTATRRLRATH) lie on the Cytoplasmic side of the membrane. The chain crosses the membrane as a helical; Signal-anchor for type II membrane protein span at residues 23–43 (PSVSTIYFLFTIFVVSTVFHC). Residues 44–354 (HQRLALVPAP…NMGRALWSGL (311 aa)) lie on the Lumenal side of the membrane. Asn-197, Asn-291, and Asn-317 each carry an N-linked (GlcNAc...) asparagine glycan.

Belongs to the glycosyltransferase 11 family. As to expression, salivary and lactating mammary glands.

Its subcellular location is the golgi apparatus. It is found in the golgi stack membrane. The enzyme catalyses a beta-D-galactosyl-(1-&gt;3)-N-acetyl-beta-D-glucosaminyl derivative + GDP-beta-L-fucose = an alpha-L-Fuc-(1-&gt;2)-beta-D-Gal-(1-&gt;3)-beta-D-GlcNAc derivative + GDP + H(+). The catalysed reaction is a beta-D-galactosyl-(1-&gt;4)-N-acetyl-beta-D-glucosaminyl derivative + GDP-beta-L-fucose = an alpha-L-Fuc-(1-&gt;2)-beta-D-Gal-(1-&gt;4)-beta-D-GlcNAc derivative + GDP + H(+). It carries out the reaction a neolactoside nLc4Cer + GDP-beta-L-fucose = a neolactoside IV(2)-alpha-Fuc-nLc4Cer + GDP + H(+). It catalyses the reaction a neolactoside nLc4Cer(d18:1(4E)) + GDP-beta-L-fucose = a neolactoside IV(2)-alpha-Fuc-nLc4Cer(d18:1(4E)) + GDP + H(+). The enzyme catalyses a ganglioside GM1 + GDP-beta-L-fucose = a ganglioside Fuc-GM1 + GDP + H(+). The catalysed reaction is a ganglioside GA1 + GDP-beta-L-fucose = a ganglioside Fuc-GA1 + GDP + H(+). It carries out the reaction Lc4Cer + GDP-beta-L-fucose = alpha-L-fucosyl-(1-&gt;2)-beta-D-galactosyl-(1-&gt;3)-N-acetyl-beta-D-glucosaminyl-(1-&gt;3)-beta-D-galactosyl-(1-&gt;4)-beta-D-glucosyl-(1&lt;-&gt;1')-ceramide + GDP + H(+). It catalyses the reaction a beta-D-Gal-(1-&gt;3)-beta-D-GlcNAc-(1-&gt;3)-beta-D-Gal-(1-&gt;4)-beta-D-Glc-(1&lt;-&gt;1')-Cer(d18:1(4E)) + GDP-beta-L-fucose = alpha-L-fucosyl-(1-&gt;2)- beta-D-galactosyl-(1-&gt;3)-N-acetyl-beta-D-glucosaminyl-(1-&gt;3)-beta-D-galactosyl-(1-&gt;4)-beta-D-glucosyl-(1&lt;-&gt;1')-N-acylsphing-4-enine + GDP + H(+). The enzyme catalyses a ganglioside GD1b + GDP-beta-L-fucose = a ganglioside Fuc-GD1b + GDP + H(+). The catalysed reaction is a ganglioside GM1 (d18:1(4E)) + GDP-beta-L-fucose = a ganglioside Fuc-GM1 (d18:1(4E)) + GDP + H(+). It carries out the reaction a globoside GalGb4Cer (d18:1(4E)) + GDP-beta-L-fucose = a globoside Globo-H (d18:1(4E)) + GDP + H(+). It catalyses the reaction a lactoside III(4)-a-Fuc-Lc4Cer + GDP-beta-L-fucose = a lactoside IV(2),III(4)-a-[Fuc]2-Lc4Cer + GDP + H(+). The enzyme catalyses beta-D-galactosyl-(1-&gt;3)-N-acetyl-D-galactosamine + GDP-beta-L-fucose = alpha-L-fucosyl-(1-&gt;2)-beta-D-galactosyl-(1-&gt;3)-N-acetyl-D-galactosamine + GDP + H(+). Its pathway is protein modification; protein glycosylation. Functionally, catalyzes the transfer of L-fucose, from a guanosine diphosphate-beta-L-fucose, to the terminal galactose on both O- and N-linked glycans chains of cell surface glycoproteins and glycolipids and the resulting epitope regulates several processes such as cell-cell interaction including host-microbe interaction, cell surface expression and cell proliferation. Preferentially fucosylates gangliosides GA1 and GM1 in the antrum, cecum and colon and in the female reproductive organs. Fucosylated host glycoproteins or glycolipids mediate interaction with intestinal microbiota influencing its composition. Creates a soluble precursor oligosaccharide FuC-alpha ((1,2)Galbeta-) called the H antigen which is an essential substrate for the final step in the soluble ABO blood group antigen synthesis pathway. This is Galactoside alpha-(1,2)-fucosyltransferase 2 from Oryctolagus cuniculus (Rabbit).